A 503-amino-acid polypeptide reads, in one-letter code: Carboxyl-terminal PDZ ligand of neuronal nitric oxide synthase protein (503 aa).

In terms of domain architecture, PID spans 26-191 (FQHGISFEAK…ESERNSDGSG (166 aa)). Residues 170-212 (HTQQNADGQEDGESERNSDGSGDPGRQLTGAERVSTATAEETD) are disordered. Ser-183, Ser-187, Ser-190, and Ser-262 each carry phosphoserine. The segment at 266–285 (LLPSSSSSKPPGLGTGTPLS) is disordered. A coiled-coil region spans residues 319-360 (AAEAAARLEAQARVHQLLLQNKDMLQHISLLVKQVQELELKL). Phosphoserine is present on residues Ser-368, Ser-371, Ser-398, and Ser-414. Residues 491–503 (QELGDSLDDEIAV) form an interaction with NOS1 region. The PDZ-binding motif lies at 501–503 (IAV).

In terms of assembly, interacts with the PDZ domain of NOS1 or the second PDZ domain of DLG4 through its C-terminus. Interacts with RASD1 and SYN1, SYN2 and SYN3 via its PID domain. Forms a ternary complex with NOS1 and RASD1. Forms a ternary complex with NOS1 and SYN1. Mainly expressed in brain. Highly expressed in accessory olfactory bulb, caudate-putamen, cerebellum, cerebral cortex, dentate gyrus of the hippocampus, islands of Calleja, olfactory bulb and supraoptic nucleus. Expressed in kidney glomeruli podocytes (at protein level).

The protein localises to the cell projection. The protein resides in the filopodium. It is found in the podosome. Adapter protein involved in neuronal nitric-oxide (NO) synthesis regulation via its association with nNOS/NOS1. The complex formed with NOS1 and synapsins is necessary for specific NO and synapsin functions at a presynaptic level. Mediates an indirect interaction between NOS1 and RASD1 leading to enhance the ability of NOS1 to activate RASD1. Competes with DLG4 for interaction with NOS1, possibly affecting NOS1 activity by regulating the interaction between NOS1 and DLG4. In kidney podocytes, plays a role in podosomes and filopodia formation through CDC42 activation. This chain is Carboxyl-terminal PDZ ligand of neuronal nitric oxide synthase protein, found in Rattus norvegicus (Rat).